The following is a 185-amino-acid chain: Acireductone dioxygenase (185 aa).

The tract at residues 1 to 22 (MSRLSIHPEGSTNATSPAEPLL) is disordered. The Fe(2+) site is built by His-102, His-104, Glu-108, and His-146. His-102, His-104, Glu-108, and His-146 together coordinate Ni(2+).

Belongs to the acireductone dioxygenase (ARD) family. Monomer. It depends on Fe(2+) as a cofactor. Requires Ni(2+) as cofactor.

It catalyses the reaction 1,2-dihydroxy-5-(methylsulfanyl)pent-1-en-3-one + O2 = 3-(methylsulfanyl)propanoate + CO + formate + 2 H(+). It carries out the reaction 1,2-dihydroxy-5-(methylsulfanyl)pent-1-en-3-one + O2 = 4-methylsulfanyl-2-oxobutanoate + formate + 2 H(+). Its pathway is amino-acid biosynthesis; L-methionine biosynthesis via salvage pathway; L-methionine from S-methyl-5-thio-alpha-D-ribose 1-phosphate: step 5/6. Functionally, catalyzes 2 different reactions between oxygen and the acireductone 1,2-dihydroxy-3-keto-5-methylthiopentene (DHK-MTPene) depending upon the metal bound in the active site. Fe-containing acireductone dioxygenase (Fe-ARD) produces formate and 2-keto-4-methylthiobutyrate (KMTB), the alpha-ketoacid precursor of methionine in the methionine recycle pathway. Ni-containing acireductone dioxygenase (Ni-ARD) produces methylthiopropionate, carbon monoxide and formate, and does not lie on the methionine recycle pathway. The protein is Acireductone dioxygenase of Prochlorococcus marinus (strain MIT 9313).